The following is a 106-amino-acid chain: Small ribosomal subunit protein uS10 (106 aa).

It belongs to the universal ribosomal protein uS10 family. As to quaternary structure, part of the 30S ribosomal subunit.

Functionally, involved in the binding of tRNA to the ribosomes. This is Small ribosomal subunit protein uS10 from Prochlorococcus marinus (strain MIT 9312).